Here is a 272-residue protein sequence, read N- to C-terminus: METYAVFGNPIAHSKSPFIHQQFAQQLNIEHPYGRVLAPINDFINTLNAFFSAGGKGANVTVPFKEEAFARADELTERAALAGAVNTLKRLEDGRLQGDNTDGIGLLSDLERLSFIRPGLRILLIGAGGASRGVLLPLLSLDCAVTITNRTVSRAEELAKLFAHTGSIQALGMDELEGHEFDLIINATSSGISGDIPAIPSSLIHLGIYCYDMFYQKGKTPFLAWCEQRGSKRNADGLGMLVAQAAHAFLLWHGVLPDVEPVIKQLQEELSA.

Shikimate-binding positions include serine 14–serine 16 and threonine 61. Catalysis depends on lysine 65, which acts as the Proton acceptor. Glutamate 77 is a binding site for NADP(+). Asparagine 86 and aspartate 102 together coordinate shikimate. NADP(+) contacts are provided by residues glycine 126–alanine 130, asparagine 149–arginine 154, and methionine 213. Residue tyrosine 215 participates in shikimate binding. Glycine 237 contacts NADP(+).

The protein belongs to the shikimate dehydrogenase family. As to quaternary structure, homodimer.

The catalysed reaction is shikimate + NADP(+) = 3-dehydroshikimate + NADPH + H(+). Its pathway is metabolic intermediate biosynthesis; chorismate biosynthesis; chorismate from D-erythrose 4-phosphate and phosphoenolpyruvate: step 4/7. Its function is as follows. Involved in the biosynthesis of the chorismate, which leads to the biosynthesis of aromatic amino acids. Catalyzes the reversible NADPH linked reduction of 3-dehydroshikimate (DHSA) to yield shikimate (SA). In Shigella boydii serotype 4 (strain Sb227), this protein is Shikimate dehydrogenase (NADP(+)).